Here is a 543-residue protein sequence, read N- to C-terminus: Limonene hydroxylase (543 aa).

The Sigma-54 factor interaction domain occupies 232–464 (VVTYNPSFEK…LRNVIERAFL (233 aa)). Residues 260 to 267 (GETGSGKE) and 324 to 333 (ADGGTLFLDE) each bind ATP.

It carries out the reaction (4S)-limonene + reduced [NADPH--hemoprotein reductase] + O2 = (1S,5R)-carveol + oxidized [NADPH--hemoprotein reductase] + H2O + H(+). The catalysed reaction is (4S)-limonene + reduced [NADPH--hemoprotein reductase] + O2 = (4S)-perillyl alcohol + oxidized [NADPH--hemoprotein reductase] + H2O + H(+). It catalyses the reaction perillyl alcohol + NAD(+) = perillyl aldehyde + NADH + H(+). The enzyme catalyses (1S,5R)-carveol + NADP(+) = (R)-carvone + NADPH + H(+). In terms of biological role, involved in limonene hydroxylation to a mixture of carveol and perillyl alcohol as well as in dehydrogenation of these products to carvone and perillyl aldehyde. Aromatic alcohols containing an isopropyl or isopropenyl group at ring position 4 also served as substrates for the dehydrogenase activity. The sequence is that of Limonene hydroxylase from Geobacillus stearothermophilus (Bacillus stearothermophilus).